A 97-amino-acid chain; its full sequence is Kininogen-1 (97 aa).

The N-terminal stretch at 1-23 (MRLWFCLSFLIILCVEHFPGTLA) is a signal peptide.

It belongs to the bradykinin-related peptide family. In terms of tissue distribution, expressed by the skin glands.

Its subcellular location is the secreted. In terms of biological role, [Ala3,Thr6]bradykinin: produces in vitro relaxation of rat arterial smooth muscle and constriction of intestinal smooth muscle. Possesses insulin-releasing activity. May target bradykinin receptors (BDKRB). The polypeptide is Kininogen-1 (Bombina variegata (Yellow-bellied toad)).